Consider the following 313-residue polypeptide: Olfactory receptor 5D18 (313 aa).

At 1–26 (MLLTDRNTSGTTFTLLGFSDYPELQV) the chain is on the extracellular side. Asn-7 carries an N-linked (GlcNAc...) asparagine glycan. The helical transmembrane segment at 27–47 (PLFLVFLAIYNVTVLGNIGLI) threads the bilayer. Residues 48-55 (VIIKINPK) are Cytoplasmic-facing. A helical transmembrane segment spans residues 56–76 (LHTPMYFFLSQLSFVDFCYSS). At 77–100 (IIAPKMLVNLVVKDRTISFLGCVV) the chain is on the extracellular side. A disulfide bridge connects residues Cys-98 and Cys-190. Residues 101–121 (QFFFFCTFVVTESFLLAVMAY) form a helical membrane-spanning segment. Residues 122 to 140 (DRFVAICNPLLYTVNMSQK) are Cytoplasmic-facing. The helical transmembrane segment at 141 to 161 (LCVLLVVGSYAWGVSCSLELT) threads the bilayer. The Extracellular portion of the chain corresponds to 162–197 (CSALKLCFHGFNTINHFFCEFSSLLSLSCSDTYINQ). A helical transmembrane segment spans residues 198–218 (WLLFFLATFNEISTLLIVLTS). Over 219–238 (YAFIVVTILKMRSVSGRRKA) the chain is Cytoplasmic. The helical transmembrane segment at 239–259 (FSTCASHLTAITIFHGTILFL) threads the bilayer. Residues 260–272 (YCVPNSKNSRHTV) are Extracellular-facing. Residues 273–293 (KVASVFYTVVIPMLNPLIYSL) traverse the membrane as a helical segment. Topologically, residues 294-313 (RNKDVKDTVTEILDTKVFSY) are cytoplasmic.

The protein belongs to the G-protein coupled receptor 1 family.

The protein resides in the cell membrane. In terms of biological role, odorant receptor. The protein is Olfactory receptor 5D18 (OR5D18) of Homo sapiens (Human).